The primary structure comprises 1014 residues: Nebulette (1014 aa).

Residues 1 to 24 (MRVPVFEDIKDETEEEKIGEEENE) are disordered. A compositionally biased stretch (acidic residues) spans 9 to 24 (IKDETEEEKIGEEENE). 23 Nebulin repeats span residues 29–63 (FYKPVIEDLSMELARKCTELISDIRYKEEFKKSKD), 64–99 (KCTFVTDSPMLNHVKNIGAFISEAKYKGTIKADLSN), 100–136 (SLYKRMPATIDSVFAGEVTQLQSEVAYKQKHDAAKGF), 137–172 (SDYAHMKEPPEVKHAMEVNKHQSNISYRKDVQDTHT), 173–205 (YSAELDRPDIKMATQISKIISNAEYKKGQGIMN), 206–241 (KEPAVIGRPDFEHAVEASKLSSQIKYKEKFDNEMKD), 242–278 (KKHHYNPLESASFRQNQLAATLASNVKYKKDIQNMHD), 279–313 (PVSDLPNLLFLDHVLKASKMLSGREYKKLFEENKG), 314–348 (MYHFDADAVEHLHHKGNAVLQSQVKYKEEYEKNKG), 349–385 (KPMLEFVETPSYQASKEAQKMQSEKVYKEDFEKEIKG), 386–422 (RSSLDLDKTPEFLHVKYITNLLREKEYKKDLENEIKG), 423–459 (KGMELNSEVLDIQRAKRASEMASEKEYKKDLESIIKG), 460–496 (KGMQAGTDTLEMQHAKKAAEIASEKDYKRDLETEIKG), 497–533 (KGMQVSTDTLDVQRAKKASEMASQKQYKKDLENEIKG), 534–569 (KGMQVSMDIPDILRAKRTSEIYSQRKYKDEAEKMLS), 570–599 (NYSTIADTPEIQRIKTTQQNISAVFYKKEV), 600–635 (GAGTAVKDSPEIERVKKNQQNISSVKYKEEIKHATA), 636–666 (ISDPPELKRVKENQKNISNLQYKEQNYKATP), 667–693 (VSMTPEIERVRRNQEQLSAVKYKGELQ), 694–728 (RGTAISDPPELKRAKENQKNISNVYYRGQLGRATT), 729–759 (LSVTPEMERVKKNQENISSVKYTQDHKQMKG), 760–794 (RPSLILDTPAMRHVKEAQNHISMVKYHEDFEKTKG), and 795–830 (RGFTPVVDDPVTERVRKNTQVVSDAAYKGVHPHIVE). Aspartate 96 carries the omega-N-methylarginine modification. The residue at position 795 (arginine 795) is an Omega-N-methylarginine. The tract at residues 836 to 953 (GIIVDLKVWR…VSSMRSMQHS (118 aa)) is linker. Residues 954–1014 (PNLRTYRAMY…LPANYIEFVN (61 aa)) enclose the SH3 domain.

Interacts (via nebulin repeats 1-5) with DESM (via rod region). Interacts (via SH3 domain) with XIRP2. In terms of assembly, interacts with ZYX/Zyxin. As to expression, abundantly expressed in cardiac muscle, but not in skeletal or smooth muscle. Localized to Z-lines in cardiac cells and to dense bodies in nonmuscle cells. Isoform 2 is expressed in non-muscle cells such as in fibroblasts.

It is found in the cytoplasm. Binds to actin and plays an important role in the assembly of the Z-disk. May functionally link sarcomeric actin to the desmin intermediate filaments in the heart muscle sarcomeres. Functionally, may play a role in the assembly of focal adhesions. This Homo sapiens (Human) protein is Nebulette.